The primary structure comprises 352 residues: Protein-glutamate methylesterase/protein-glutamine glutaminase 2 (352 aa).

A Response regulatory domain is found at 1-116 (MVVDDSAVVR…KQFLTDSADE (116 aa)). Asp50 carries the 4-aspartylphosphate modification. Residues 162 to 352 (AQTTERIVAI…MAREIVTQLQ (191 aa)) enclose the CheB-type methylesterase domain. Residues Ser174, His200, and Asp296 contribute to the active site.

Belongs to the CheB family. Phosphorylated by CheA. Phosphorylation of the N-terminal regulatory domain activates the methylesterase activity.

The protein localises to the cytoplasm. The catalysed reaction is [protein]-L-glutamate 5-O-methyl ester + H2O = L-glutamyl-[protein] + methanol + H(+). The enzyme catalyses L-glutaminyl-[protein] + H2O = L-glutamyl-[protein] + NH4(+). Functionally, involved in chemotaxis. Part of a chemotaxis signal transduction system that modulates chemotaxis in response to various stimuli. Catalyzes the demethylation of specific methylglutamate residues introduced into the chemoreceptors (methyl-accepting chemotaxis proteins or MCP) by CheR. Also mediates the irreversible deamidation of specific glutamine residues to glutamic acid. The protein is Protein-glutamate methylesterase/protein-glutamine glutaminase 2 of Xanthomonas euvesicatoria pv. vesicatoria (strain 85-10) (Xanthomonas campestris pv. vesicatoria).